The following is a 262-amino-acid chain: Thiamine thiazole synthase (262 aa).

NAD(+)-binding positions include alanine 36, 55–56 (EK), glycine 63, valine 127, and 154–156 (HVD). 2 residues coordinate Fe cation: aspartate 156 and histidine 171. Methionine 224 contributes to the NAD(+) binding site. Arginine 234 serves as a coordination point for glycine.

This sequence belongs to the THI4 family. In terms of assembly, homooctamer; tetramer of dimers. Requires Fe(2+) as cofactor.

The catalysed reaction is hydrogen sulfide + glycine + NAD(+) = ADP-5-ethyl-4-methylthiazole-2-carboxylate + nicotinamide + 3 H2O + H(+). It participates in cofactor biosynthesis; thiamine diphosphate biosynthesis. In terms of biological role, involved in the biosynthesis of the thiazole moiety of thiamine. Catalyzes the conversion of NAD and glycine to adenosine diphosphate 5-(2-hydroxyethyl)-4-methylthiazole-2-carboxylate (ADT), an adenylated thiazole intermediate, using free sulfide as a source of sulfur. This Methanothrix thermoacetophila (strain DSM 6194 / JCM 14653 / NBRC 101360 / PT) (Methanosaeta thermophila) protein is Thiamine thiazole synthase.